A 402-amino-acid polypeptide reads, in one-letter code: 1-deoxy-D-xylulose 5-phosphate reductoisomerase (402 aa).

7 residues coordinate NADPH: Thr-21, Gly-22, Ser-23, Ile-24, Gly-47, Asn-50, and Asn-127. Lys-128 provides a ligand contact to 1-deoxy-D-xylulose 5-phosphate. Glu-129 is an NADPH binding site. Asp-151 is a binding site for Mn(2+). Ser-152, Glu-153, Ser-177, and His-200 together coordinate 1-deoxy-D-xylulose 5-phosphate. A Mn(2+)-binding site is contributed by Glu-153. Gly-206 provides a ligand contact to NADPH. Positions 213, 218, 219, and 222 each coordinate 1-deoxy-D-xylulose 5-phosphate. Glu-222 lines the Mn(2+) pocket.

Belongs to the DXR family. The cofactor is Mg(2+). Requires Mn(2+) as cofactor.

It carries out the reaction 2-C-methyl-D-erythritol 4-phosphate + NADP(+) = 1-deoxy-D-xylulose 5-phosphate + NADPH + H(+). Its pathway is isoprenoid biosynthesis; isopentenyl diphosphate biosynthesis via DXP pathway; isopentenyl diphosphate from 1-deoxy-D-xylulose 5-phosphate: step 1/6. Catalyzes the NADPH-dependent rearrangement and reduction of 1-deoxy-D-xylulose-5-phosphate (DXP) to 2-C-methyl-D-erythritol 4-phosphate (MEP). This chain is 1-deoxy-D-xylulose 5-phosphate reductoisomerase, found in Mycobacterium marinum (strain ATCC BAA-535 / M).